Reading from the N-terminus, the 1972-residue chain is Myosin-11 (1972 aa).

Phosphoserine is present on residues serine 8, serine 23, and serine 40. One can recognise a Myosin N-terminal SH3-like domain in the interval 31 to 81; it reads VAKKLVWVPSEKQGFEAASIKEEKGDEVVVELVENGKKVTVGKDDIQKMNP. In terms of domain architecture, Myosin motor spans 85–783; sequence SKVEDMAELT…VLAHLEEERD (699 aa). At lysine 129 the chain carries N6,N6,N6-trimethyllysine. 178 to 185 is a binding site for ATP; it reads GESGAGKT. Actin-binding regions lie at residues 661–683 and 762–776; these read LGKL…IPNH and RIGQ…GVLA. One can recognise an IQ domain in the interval 786-815; sequence ITDVIMAFQAMCRGYLARKAFTKRQQQLTA. The stretch at 844 to 1934 forms a coiled coil; that stretch reads LLQVTRQEEE…KSKLRRGNEA (1091 aa). Threonine 1177 bears the Phosphothreonine mark. 2 positions are modified to phosphoserine: serine 1684 and serine 1722. Positions 1771 to 1788 are enriched in polar residues; it reads NELATERSTAQKNESARQ. Disordered regions lie at residues 1771–1797 and 1867–1972; these read NELA…NKEL and QYKE…KASE. Basic and acidic residues predominate over residues 1867-1876; sequence QYKEQAEKGN. Residues 1935 to 1972 are C-terminal; that stretch reads SFVPSRRAGGRRVIENTDGSEEEMDARDSDFNGTKASE. Residue threonine 1951 is modified to Phosphothreonine. Residues serine 1954 and serine 1971 each carry the phosphoserine modification.

It belongs to the TRAFAC class myosin-kinesin ATPase superfamily. Myosin family. In terms of assembly, muscle myosin is a hexameric protein that consists of 2 heavy chain subunits (MHC), 2 alkali light chain subunits (MLC) and 2 regulatory light chain subunits (MLC-2).

Its subcellular location is the melanosome. It localises to the cytoplasm. The protein resides in the myofibril. Functionally, muscle contraction. This chain is Myosin-11 (Myh11), found in Mus musculus (Mouse).